A 290-amino-acid chain; its full sequence is Ribonuclease HIII (290 aa).

An RNase H type-2 domain is found at 78–290 (LPLIGTDEVG…FKNTEKAKNA (213 aa)). A divalent metal cation is bound by residues Asp-84, Glu-85, and Asp-187.

It belongs to the RNase HII family. RnhC subfamily. Mn(2+) serves as cofactor. Requires Mg(2+) as cofactor.

It is found in the cytoplasm. It catalyses the reaction Endonucleolytic cleavage to 5'-phosphomonoester.. Endonuclease that specifically degrades the RNA of RNA-DNA hybrids. The chain is Ribonuclease HIII from Streptococcus pneumoniae serotype 2 (strain D39 / NCTC 7466).